The following is a 288-amino-acid chain: Ankyrin repeat and SOCS box protein 8 (288 aa).

Ser-17 carries the post-translational modification Phosphoserine. ANK repeat units lie at residues 52–81 (GTLK…EVNA), 85–113 (YNRT…NPNA), 117–146 (NRDT…SVNA), and 150–179 (NNDT…EVRV). In terms of domain architecture, SOCS box spans 235–288 (QLCEKLTVLCSAPGTLKTLARYTVRRSLGLQYLPDAVKGLPLPASLKEYLLLLE).

Belongs to the ankyrin SOCS box (ASB) family. Interacts with TBK1; this interaction promotes TBK1 proteasomal degradation. Phosphorylated by TBK1.

Its subcellular location is the cytoplasm. It participates in protein modification; protein ubiquitination. Functionally, may be a substrate-recognition component of a SCF-like ECS (Elongin-Cullin-SOCS-box protein) E3 ubiquitin-protein ligase complex which mediates the ubiquitination and subsequent proteasomal degradation of target proteins. Inhibits IFN-beta production through the IRF3 signaling pathway by targeting TBK1 via 'Lys-48'-linked ubiquitination, leading to its proteasomal degradation. This is Ankyrin repeat and SOCS box protein 8 (ASB8) from Pongo abelii (Sumatran orangutan).